The following is a 503-amino-acid chain: MVQGTASSVGKSLLTAALCRIFNEDGYRVVPFKSQNMALNSFVTEEGLEMGRAQVFQAEAARIKPQVKMNPILLKPTADSHAQVIIQGAVHGNMTAQEYHQFKPQLKSMLRDIYLDLETSNDIVVIEGAGSPAEINLRDQDIVNMGMAEIADSPVILVGDIDRGGVFASLYGTIMLLEESERSRVKGILINKFRGDLKILEPGLKMLEELINIPVIGVIPYERFDIEDEDSLSDRLQQKNHQESDISIAIIRLPHISNFTDFHLLEQMEGVNVNYIGRNQSIGRPDMIIIPGSKNTIGDLKYLQEVGLAAEIIEVHKTGTMICGICGGYQMLGNRILDPNHVESPEGEIQGLGLLDVETNFESEKVTTQVSGKILDHKLLEEIECGGIEVKGYEIHMGRTLRGATIKPFVKIEERLSKPVDDFDGAINEAGTVFGTYLHGIFDEISLVEKIINGLLMKKGLPTIQQRNCSLEELKDREYSRLAKVVRENIDMKYIYKILEGEA.

The region spanning 245–447 (DISIAIIRLP…LHGIFDEISL (203 aa)) is the GATase cobBQ-type domain. The active-site Nucleophile is the C326. The active site involves H439.

The protein belongs to the CobB/CobQ family. CobQ subfamily.

It participates in cofactor biosynthesis; adenosylcobalamin biosynthesis. Functionally, catalyzes amidations at positions B, D, E, and G on adenosylcobyrinic A,C-diamide. NH(2) groups are provided by glutamine, and one molecule of ATP is hydrogenolyzed for each amidation. This is Cobyric acid synthase from Alkaliphilus metalliredigens (strain QYMF).